Reading from the N-terminus, the 154-residue chain is Myoglobin (154 aa).

The Globin domain occupies glycine 2–lysine 148. Histidine 65 provides a ligand contact to nitrite. Histidine 65 is a binding site for O2. Histidine 94 serves as a coordination point for heme b.

Monomeric.

Its subcellular location is the cytoplasm. The protein resides in the sarcoplasm. The enzyme catalyses Fe(III)-heme b-[protein] + nitric oxide + H2O = Fe(II)-heme b-[protein] + nitrite + 2 H(+). The catalysed reaction is H2O2 + AH2 = A + 2 H2O. Its function is as follows. Monomeric heme protein which primary function is to store oxygen and facilitate its diffusion within muscle tissues. Reversibly binds oxygen through a pentacoordinated heme iron and enables its timely and efficient release as needed during periods of heightened demand. Depending on the oxidative conditions of tissues and cells, and in addition to its ability to bind oxygen, it also has a nitrite reductase activity whereby it regulates the production of bioactive nitric oxide. Under stress conditions, like hypoxia and anoxia, it also protects cells against reactive oxygen species thanks to its pseudoperoxidase activity. The polypeptide is Myoglobin (Dromaius novaehollandiae (Emu)).